The sequence spans 571 residues: Methionine--tRNA ligase (571 aa).

The 'HIGH' region motif lies at 10–20; sequence PYVNAVPHLGN. 4 residues coordinate Zn(2+): Cys143, Cys146, Cys156, and Cys159. The short motif at 333-337 is the 'KMSKS' region element; sequence KFSKS. Lys336 contributes to the ATP binding site.

Belongs to the class-I aminoacyl-tRNA synthetase family. MetG type 1 subfamily. Zn(2+) is required as a cofactor.

Its subcellular location is the cytoplasm. It catalyses the reaction tRNA(Met) + L-methionine + ATP = L-methionyl-tRNA(Met) + AMP + diphosphate. In terms of biological role, is required not only for elongation of protein synthesis but also for the initiation of all mRNA translation through initiator tRNA(fMet) aminoacylation. The chain is Methionine--tRNA ligase from Sulfolobus acidocaldarius (strain ATCC 33909 / DSM 639 / JCM 8929 / NBRC 15157 / NCIMB 11770).